Consider the following 300-residue polypeptide: Ribosomal protein L11 methyltransferase (300 aa).

Residues Thr-152, Gly-173, Asp-195, and Asn-234 each contribute to the S-adenosyl-L-methionine site.

The protein belongs to the methyltransferase superfamily. PrmA family.

It is found in the cytoplasm. The catalysed reaction is L-lysyl-[protein] + 3 S-adenosyl-L-methionine = N(6),N(6),N(6)-trimethyl-L-lysyl-[protein] + 3 S-adenosyl-L-homocysteine + 3 H(+). Its function is as follows. Methylates ribosomal protein L11. This is Ribosomal protein L11 methyltransferase from Burkholderia mallei (strain NCTC 10247).